The sequence spans 38 residues: Large ribosomal subunit protein bL36 (38 aa).

Belongs to the bacterial ribosomal protein bL36 family.

This Buchnera aphidicola subsp. Schizaphis graminum (strain Sg) protein is Large ribosomal subunit protein bL36.